The primary structure comprises 363 residues: DNA replication and repair protein RecF (363 aa).

Residue 30–37 (GINGSGKS) coordinates ATP.

It belongs to the RecF family.

It localises to the cytoplasm. Its function is as follows. The RecF protein is involved in DNA metabolism; it is required for DNA replication and normal SOS inducibility. RecF binds preferentially to single-stranded, linear DNA. It also seems to bind ATP. The sequence is that of DNA replication and repair protein RecF from Pseudoalteromonas atlantica (strain T6c / ATCC BAA-1087).